The chain runs to 381 residues: Queuine tRNA-ribosyltransferase (381 aa).

D90 acts as the Proton acceptor in catalysis. Residues 90-94 (DSGGF), D144, Q193, and G221 contribute to the substrate site. Residues 252-258 (GVGTPEN) form an RNA binding region. The active-site Nucleophile is D271. Positions 276 to 280 (TRNAR) are RNA binding; important for wobble base 34 recognition. Residues C309, C311, C314, and H340 each coordinate Zn(2+).

Belongs to the queuine tRNA-ribosyltransferase family. In terms of assembly, homodimer. Within each dimer, one monomer is responsible for RNA recognition and catalysis, while the other monomer binds to the replacement base PreQ1. Zn(2+) serves as cofactor.

It catalyses the reaction 7-aminomethyl-7-carbaguanine + guanosine(34) in tRNA = 7-aminomethyl-7-carbaguanosine(34) in tRNA + guanine. It participates in tRNA modification; tRNA-queuosine biosynthesis. Its function is as follows. Catalyzes the base-exchange of a guanine (G) residue with the queuine precursor 7-aminomethyl-7-deazaguanine (PreQ1) at position 34 (anticodon wobble position) in tRNAs with GU(N) anticodons (tRNA-Asp, -Asn, -His and -Tyr). Catalysis occurs through a double-displacement mechanism. The nucleophile active site attacks the C1' of nucleotide 34 to detach the guanine base from the RNA, forming a covalent enzyme-RNA intermediate. The proton acceptor active site deprotonates the incoming PreQ1, allowing a nucleophilic attack on the C1' of the ribose to form the product. After dissociation, two additional enzymatic reactions on the tRNA convert PreQ1 to queuine (Q), resulting in the hypermodified nucleoside queuosine (7-(((4,5-cis-dihydroxy-2-cyclopenten-1-yl)amino)methyl)-7-deazaguanosine). This Helicobacter hepaticus (strain ATCC 51449 / 3B1) protein is Queuine tRNA-ribosyltransferase.